A 345-amino-acid polypeptide reads, in one-letter code: Ribosomal RNA small subunit methyltransferase H (345 aa).

Residues 47–49 (GGY), Asp65, Phe92, Asp113, and Gln120 each bind S-adenosyl-L-methionine. The tract at residues 296–345 (EPGPDEVAGNPRARSAKLRAAERTNAPAHPGGDLMGLLPAPPPQRHGRRR) is disordered.

Belongs to the methyltransferase superfamily. RsmH family.

The protein localises to the cytoplasm. It carries out the reaction cytidine(1402) in 16S rRNA + S-adenosyl-L-methionine = N(4)-methylcytidine(1402) in 16S rRNA + S-adenosyl-L-homocysteine + H(+). Functionally, specifically methylates the N4 position of cytidine in position 1402 (C1402) of 16S rRNA. The protein is Ribosomal RNA small subunit methyltransferase H of Xanthobacter autotrophicus (strain ATCC BAA-1158 / Py2).